The sequence spans 304 residues: Dermonecrotic toxin LiSicTox-betaIA1i (304 aa).

The N-terminal stretch at 1-21 (MLLPAVISFIVYAVFLQEANG) is a signal peptide. A propeptide spanning residues 22-26 (HAAER) is cleaved from the precursor. Residue His-38 is part of the active site. The Mg(2+) site is built by Glu-58 and Asp-60. His-74 functions as the Nucleophile in the catalytic mechanism. 2 disulfide bridges follow: Cys-78-Cys-84 and Cys-80-Cys-223. Mg(2+) is bound at residue Asp-118.

It belongs to the arthropod phospholipase D family. Class II subfamily. Class IIb sub-subfamily. Mg(2+) is required as a cofactor. In terms of tissue distribution, expressed by the venom gland.

It is found in the secreted. It carries out the reaction an N-(acyl)-sphingosylphosphocholine = an N-(acyl)-sphingosyl-1,3-cyclic phosphate + choline. It catalyses the reaction an N-(acyl)-sphingosylphosphoethanolamine = an N-(acyl)-sphingosyl-1,3-cyclic phosphate + ethanolamine. The enzyme catalyses a 1-acyl-sn-glycero-3-phosphocholine = a 1-acyl-sn-glycero-2,3-cyclic phosphate + choline. The catalysed reaction is a 1-acyl-sn-glycero-3-phosphoethanolamine = a 1-acyl-sn-glycero-2,3-cyclic phosphate + ethanolamine. Its function is as follows. Dermonecrotic toxins cleave the phosphodiester linkage between the phosphate and headgroup of certain phospholipids (sphingolipid and lysolipid substrates), forming an alcohol (often choline) and a cyclic phosphate. This toxin acts on sphingomyelin (SM) with low activity. It may also act on ceramide phosphoethanolamine (CPE), lysophosphatidylcholine (LPC) and lysophosphatidylethanolamine (LPE), but not on lysophosphatidylserine (LPS), and lysophosphatidylglycerol (LPG). It acts by transphosphatidylation, releasing exclusively cyclic phosphate products as second products. Induces inflammatory response but no or very weak hemolysis, dermonecrosis, vascular permeability, edema, and cytotoxicity against renal epithelial cells. Causes swelling and erythema. In vivo, is not lethal to mice when intraperitoneally injected. The protein is Dermonecrotic toxin LiSicTox-betaIA1i of Loxosceles intermedia (Brown spider).